Consider the following 258-residue polypeptide: UPF0246 protein Asuc_0575 (258 aa).

Belongs to the UPF0246 family.

The sequence is that of UPF0246 protein Asuc_0575 from Actinobacillus succinogenes (strain ATCC 55618 / DSM 22257 / CCUG 43843 / 130Z).